We begin with the raw amino-acid sequence, 465 residues long: GTPase Der (465 aa).

EngA-type G domains are found at residues 3-167 and 179-352; these read PLVA…PERS and IHIA…VSAL. Residues 9 to 16, 57 to 61, 119 to 122, 185 to 192, 232 to 236, and 297 to 300 contribute to the GTP site; these read GRPNVGKS, DTGGM, NKID, DTAGL, and NKWD. One can recognise a KH-like domain in the interval 353–437; the sequence is RQFSTSEVNK…PVRFLFREGD (85 aa).

The protein belongs to the TRAFAC class TrmE-Era-EngA-EngB-Septin-like GTPase superfamily. EngA (Der) GTPase family. In terms of assembly, associates with the 50S ribosomal subunit.

Functionally, GTPase that plays an essential role in the late steps of ribosome biogenesis. The chain is GTPase Der from Xylella fastidiosa (strain M12).